The sequence spans 227 residues: PKHD-type hydroxylase Bcep18194_B0892 (227 aa).

Positions Lys-78–Ser-178 constitute a Fe2OG dioxygenase domain. Positions 96, 98, and 159 each coordinate Fe cation. Arg-169 is a binding site for 2-oxoglutarate.

Fe(2+) serves as cofactor. The cofactor is L-ascorbate.

The protein is PKHD-type hydroxylase Bcep18194_B0892 of Burkholderia lata (strain ATCC 17760 / DSM 23089 / LMG 22485 / NCIMB 9086 / R18194 / 383).